The primary structure comprises 168 residues: Small ribosomal subunit protein uS5 (168 aa).

One can recognise an S5 DRBM domain in the interval 13 to 76 (IQEKLVAVRR…ENARRNMISV (64 aa)).

It belongs to the universal ribosomal protein uS5 family. Part of the 30S ribosomal subunit. Contacts proteins S4 and S8.

In terms of biological role, with S4 and S12 plays an important role in translational accuracy. Its function is as follows. Located at the back of the 30S subunit body where it stabilizes the conformation of the head with respect to the body. This is Small ribosomal subunit protein uS5 from Coxiella burnetii (strain RSA 493 / Nine Mile phase I).